A 969-amino-acid polypeptide reads, in one-letter code: MSFALGQRWISDTESDLGLGTVVALDARTVTLMFAASEENRVYARSDAPVTRVIFNVGDVVDSQQGWSLQVEQVVEDQGVYTYLGTRVDTEESGVALREIFLSNQIRFNKPQDKLFAGQIDRMDNFVLRYRALTNQYQQHKSPMRGLCGMRAGLIPHQLYIAHEVGRRHAPRVLLADEVGLGKTIEAGMIIHQQVLTGRAERILIVVPETLQHQWLVEMMRRFNLHFSIFDEERCVEAFSEADNPFETQQYVLCSLDFLRKSRQRFEQALEAEWDLLVVDEAHHLEWHPEKPSREYQVIEALAEQTPGVLLLTATPEQLGRESHFARLRLLDADRFYDYEAFVKEEEQYAPVADAVTALFSGEKLSDEAKNKITELLSEQDVEPLFKALESHASEDEIALARQELIDNLMDRHGTGRVLFRNTRAAIKGFPVRNVHLLPLEIPSQYTTSMRVAGMLGGKLTPEARAMKMLYPEEIFQEFEGEESSWWQFDSRVNWLLEKVKAKRSEKILVIASRASTALQLEQALREREGIRATVFHEGMSIIERDKAAAYFAQEEGGAQVLICSEIGSEGRNFQFANQLVMFDLPFNPDLLEQRIGRLDRIGQKRDIDVYVPYLTETSQAILARWFQEGLNAFAETCPTGRAVYDAFAERLIPILAAGGGEELEVIIEESAKLNKTLKSQLEVGRDRLLEMHSNGGEKAQQIAEQIAKTDGDTNLVTFALSLFDAIGLHQEDRGENALVVTPAEHMMVPSYPGLPYEGATITFDRDTALSREDMHFISWEHPMVQGGIDLLMSEGVGTCAVSLLKNKALPVGTILLELVYVVDAQAPKRSGISRFLPVSPIRILMDARGNDLSSQVEFESFNRQLSPVNRHLASKLVSSVQHDVHRLITASETAVEPRVSAIREQAQRDMQQSLNSELERLLALKAVNPNIRDEEIEVLDQQIKELTGYIAQAQYQLDSLRLIVVAHN.

A Helicase ATP-binding domain is found at 164-334 (EVGRRHAPRV…FARLRLLDAD (171 aa)). ATP is bound at residue 177 to 184 (DEVGLGKT). The short motif at 280–283 (DEAH) is the DEAH box element. The 155-residue stretch at 492 to 646 (RVNWLLEKVK…TCPTGRAVYD (155 aa)) folds into the Helicase C-terminal domain.

It belongs to the SNF2/RAD54 helicase family. RapA subfamily. In terms of assembly, interacts with the RNAP. Has a higher affinity for the core RNAP than for the holoenzyme. Its ATPase activity is stimulated by binding to RNAP.

Transcription regulator that activates transcription by stimulating RNA polymerase (RNAP) recycling in case of stress conditions such as supercoiled DNA or high salt concentrations. Probably acts by releasing the RNAP, when it is trapped or immobilized on tightly supercoiled DNA. Does not activate transcription on linear DNA. Probably not involved in DNA repair. The polypeptide is RNA polymerase-associated protein RapA (Vibrio cholerae serotype O1 (strain ATCC 39315 / El Tor Inaba N16961)).